Consider the following 571-residue polypeptide: MTPALAAGLQVAFVLAVLAVAYVPVGDYMARVYESRRHLRFESVLYRLCRINPHTEQTWYGYAGSVLGFSTASVLFLYALQRIQGVLPLSGDLSGVSPAVAFNTAVSFVTNTNWQSYAPETTMSNLTQPVGLAVQNFVSAAVGMAVAVALIRGFVRVSRGGEIGNFWVDLTRGSLRILLPFSFVIALILLSQGVIQSFHPGFASTGLDGNSVTNALAPVASQEAIKELGTNGGGILAANSAHPFENPTPVSNIVEILAILLIPVSLTRTFGTMVGDPHDRASEVSGHRQGLTLLAVMGILWGSLLAVTLAAESGRRGVAATAAGAMMEGKEVRFGIPGTALFAVSTTGTSTGAVNSAHDSLSPLGGGAVLLNMLLGEIAPGGVGTGLYGILVLALIAVFVGGLLVGRTPEYLGKKLRQREITLAALSVLVMPALVLIGTGITVILSSTTGYQGNSGDPGSPGSIHGFSEVLYAFASASNNNGSAFGGLTVTSDWFQTALGLCMLFGRFLPIIFVLALAGSLASQKKTAAGAGTLPTAGPMFTGLLTGTVVLVAALTFFPALALGPIAEALQ.

The next 12 membrane-spanning stretches (helical) occupy residues 5 to 25 (LAAGLQVAFVLAVLAVAYVPV), 60 to 80 (YGYAGSVLGFSTASVLFLYAL), 86 to 106 (VLPLSGDLSGVSPAVAFNTAV), 131 to 151 (GLAVQNFVSAAVGMAVAVALI), 177 to 197 (ILLPFSFVIALILLSQGVIQS), 247 to 267 (PTPVSNIVEILAILLIPVSLT), 291 to 311 (LTLLAVMGILWGSLLAVTLAA), 334 to 354 (FGIPGTALFAVSTTGTSTGAV), 386 to 406 (GLYGILVLALIAVFVGGLLVG), 425 to 445 (ALSVLVMPALVLIGTGITVIL), 498 to 518 (ALGLCMLFGRFLPIIFVLALA), and 547 to 567 (GTVVLVAALTFFPALALGPIA).

Belongs to the KdpA family. In terms of assembly, the system is composed of three essential subunits: KdpA, KdpB and KdpC.

The protein localises to the cell membrane. Its function is as follows. Part of the high-affinity ATP-driven potassium transport (or Kdp) system, which catalyzes the hydrolysis of ATP coupled with the electrogenic transport of potassium into the cytoplasm. This subunit binds the extracellular potassium ions and delivers the ions to the membrane domain of KdpB through an intramembrane tunnel. The protein is Potassium-transporting ATPase potassium-binding subunit of Rhodococcus jostii (strain RHA1).